Reading from the N-terminus, the 427-residue chain is Serine--tRNA ligase (427 aa).

An L-serine-binding site is contributed by 229–231; it reads TAE. Residue 260 to 262 coordinates ATP; that stretch reads RSE. Residue glutamate 283 participates in L-serine binding. 347 to 350 contributes to the ATP binding site; the sequence is EISS. Serine 383 is an L-serine binding site.

It belongs to the class-II aminoacyl-tRNA synthetase family. Type-1 seryl-tRNA synthetase subfamily. As to quaternary structure, homodimer. The tRNA molecule binds across the dimer.

Its subcellular location is the cytoplasm. It carries out the reaction tRNA(Ser) + L-serine + ATP = L-seryl-tRNA(Ser) + AMP + diphosphate + H(+). The enzyme catalyses tRNA(Sec) + L-serine + ATP = L-seryl-tRNA(Sec) + AMP + diphosphate + H(+). Its pathway is aminoacyl-tRNA biosynthesis; selenocysteinyl-tRNA(Sec) biosynthesis; L-seryl-tRNA(Sec) from L-serine and tRNA(Sec): step 1/1. Catalyzes the attachment of serine to tRNA(Ser). Is also able to aminoacylate tRNA(Sec) with serine, to form the misacylated tRNA L-seryl-tRNA(Sec), which will be further converted into selenocysteinyl-tRNA(Sec). This Oleidesulfovibrio alaskensis (strain ATCC BAA-1058 / DSM 17464 / G20) (Desulfovibrio alaskensis) protein is Serine--tRNA ligase.